The sequence spans 285 residues: Tropomyosin alpha-3 chain (285 aa).

The stretch at 1-285 (MMEAIKKKMQ…DHALNDMTSI (285 aa)) forms a coiled coil. An N-acetylmethionine modification is found at Met-2. Met-2 is subject to N-acetylalanine. The segment covering 16-41 (KENALDRAEQAEAEQKQAEERSKQLE) has biased composition (basic and acidic residues). The disordered stretch occupies residues 16–44 (KENALDRAEQAEAEQKQAEERSKQLEDEL). Thr-54 carries the post-translational modification Phosphothreonine. Ser-62 and Ser-88 each carry phosphoserine. Thr-109 carries the phosphothreonine modification. An N6-acetyllysine mark is found at Glu-125 and Leu-177. The residue at position 207 (Ser-207) is a Phosphoserine. Tyr-215 is subject to N6-acetyllysine. Ser-216 carries the post-translational modification Phosphoserine. Residue Thr-253 is modified to Phosphothreonine. Position 262 is a phosphotyrosine (Tyr-262). Ser-272 carries the phosphoserine modification. Thr-283 bears the Phosphothreonine mark. At Ser-284 the chain carries Phosphoserine.

The protein belongs to the tropomyosin family. Homodimer. Heterodimer of an alpha (TPM1, TPM3 or TPM4) and a beta (TPM2) chain. Interacts with TMOD1. Interacts with TNNT1.

It localises to the cytoplasm. The protein resides in the cytoskeleton. Binds to actin filaments in muscle and non-muscle cells. Plays a central role, in association with the troponin complex, in the calcium dependent regulation of vertebrate striated muscle contraction. Smooth muscle contraction is regulated by interaction with caldesmon. In non-muscle cells is implicated in stabilizing cytoskeleton actin filaments. This is Tropomyosin alpha-3 chain (TPM3) from Homo sapiens (Human).